Reading from the N-terminus, the 192-residue chain is Adenylate kinase (192 aa).

12–17 (GSGKTT) is a binding site for ATP. The NMP stretch occupies residues 34–63 (STGDLLRAQVASGSELGKTIDSFISKGNLV). Residues Thr35, Arg40, 61-63 (NLV), 88-91 (GYPR), and Gln95 contribute to the AMP site. The LID stretch occupies residues 130 to 136 (GRNRGAD). Position 131 (Arg131) interacts with ATP. AMP contacts are provided by Arg133 and Arg145. Arg173 lines the ATP pocket.

This sequence belongs to the adenylate kinase family. Monomer.

The protein localises to the cytoplasm. The enzyme catalyses AMP + ATP = 2 ADP. It functions in the pathway purine metabolism; AMP biosynthesis via salvage pathway; AMP from ADP: step 1/1. Catalyzes the reversible transfer of the terminal phosphate group between ATP and AMP. Plays an important role in cellular energy homeostasis and in adenine nucleotide metabolism. The polypeptide is Adenylate kinase (Campylobacter jejuni subsp. doylei (strain ATCC BAA-1458 / RM4099 / 269.97)).